The chain runs to 63 residues: Large ribosomal subunit protein uL30 (63 aa).

Belongs to the universal ribosomal protein uL30 family. Part of the 50S ribosomal subunit.

This is Large ribosomal subunit protein uL30 from Caulobacter sp. (strain K31).